Reading from the N-terminus, the 398-residue chain is Putative F-box protein At1g67450 (398 aa).

The F-box domain occupies 2–56; the sequence is TMMMSDLPNDLVEEILSRVPITSLGAVRSTCKRWNGLSKDRIVCKGDANQQFTGF.

The chain is Putative F-box protein At1g67450 from Arabidopsis thaliana (Mouse-ear cress).